Reading from the N-terminus, the 215-residue chain is Peptide methionine sulfoxide reductase MsrA (215 aa).

Cysteine 58 is a catalytic residue.

It belongs to the MsrA Met sulfoxide reductase family.

The enzyme catalyses L-methionyl-[protein] + [thioredoxin]-disulfide + H2O = L-methionyl-(S)-S-oxide-[protein] + [thioredoxin]-dithiol. The catalysed reaction is [thioredoxin]-disulfide + L-methionine + H2O = L-methionine (S)-S-oxide + [thioredoxin]-dithiol. Its function is as follows. Has an important function as a repair enzyme for proteins that have been inactivated by oxidation. Catalyzes the reversible oxidation-reduction of methionine sulfoxide in proteins to methionine. This is Peptide methionine sulfoxide reductase MsrA from Pseudomonas aeruginosa (strain LESB58).